Here is a 480-residue protein sequence, read N- to C-terminus: Glutamate--tRNA ligase (480 aa).

Residues 21–31 (PSPTGYLHVGG) carry the 'HIGH' region motif. Zn(2+)-binding residues include cysteine 110, cysteine 112, cysteine 137, and histidine 139. Residues 248–252 (KLSKR) carry the 'KMSKS' region motif. An ATP-binding site is contributed by lysine 251.

It belongs to the class-I aminoacyl-tRNA synthetase family. Glutamate--tRNA ligase type 1 subfamily. In terms of assembly, monomer. It depends on Zn(2+) as a cofactor.

The protein localises to the cytoplasm. It catalyses the reaction tRNA(Glu) + L-glutamate + ATP = L-glutamyl-tRNA(Glu) + AMP + diphosphate. Its function is as follows. Catalyzes the attachment of glutamate to tRNA(Glu) in a two-step reaction: glutamate is first activated by ATP to form Glu-AMP and then transferred to the acceptor end of tRNA(Glu). In Actinobacillus succinogenes (strain ATCC 55618 / DSM 22257 / CCUG 43843 / 130Z), this protein is Glutamate--tRNA ligase.